The sequence spans 472 residues: Squamosa promoter-binding-like protein 18 (472 aa).

The segment at 89 to 110 (AKVPPSTSTLKRPRGGGGGGGG) is disordered. The segment at 112–189 (CPSCAVDGCK…DGHNRRRRKP (78 aa)) adopts an SBP-type zinc-finger fold. Zn(2+) is bound by residues C115, C120, C137, H140, C156, C159, H163, and C175. A Bipartite nuclear localization signal motif is present at residues 172–188 (KRSCRKRLDGHNRRRRK). Disordered regions lie at residues 179–218 (LDGHNRRRRKPQADSMSSGSFMTSQQGTRFASFTPPRPEP), 233–261 (SHHHHPHPVMTSRQPHFVGSPSSATTAAF), and 358–381 (SVDVSRMVQPSPAAAAGAEHHHHH). Positions 192–209 (DSMSSGSFMTSQQGTRFA) are enriched in polar residues. Residues 252–261 (SPSSATTAAF) are compositionally biased toward low complexity.

In terms of tissue distribution, expressed in young panicles.

The protein localises to the nucleus. Its function is as follows. Trans-acting factor that binds specifically to the consensus nucleotide sequence 5'-TNCGTACAA-3'. May be involved in panicle development. This is Squamosa promoter-binding-like protein 18 (SPL18) from Oryza sativa subsp. japonica (Rice).